The primary structure comprises 371 residues: DNA replication and repair protein RecF (371 aa).

An ATP-binding site is contributed by 30–37 (GQNGSGKT).

It belongs to the RecF family.

The protein resides in the cytoplasm. Its function is as follows. The RecF protein is involved in DNA metabolism; it is required for DNA replication and normal SOS inducibility. RecF binds preferentially to single-stranded, linear DNA. It also seems to bind ATP. This chain is DNA replication and repair protein RecF, found in Chlorobium phaeovibrioides (strain DSM 265 / 1930) (Prosthecochloris vibrioformis (strain DSM 265)).